The primary structure comprises 351 residues: 2-Hydroxyacid oxidase 2 (351 aa).

The FMN hydroxy acid dehydrogenase domain maps to 2–351 (SLVCLTDFQA…NRNLVQFSRL (350 aa)). Residues 77 to 79 (PTG), S106, and Q128 each bind FMN. Y130 serves as a coordination point for a 2-oxocarboxylate. T156 is an FMN binding site. R165 is a binding site for a 2-oxocarboxylate. The residue at position 178 (T178) is a Phosphothreonine. K222 serves as a coordination point for FMN. The active-site Proton acceptor is H246. Residue R249 participates in a 2-oxocarboxylate binding. FMN-binding positions include 277–281 (DGGVR) and 300–301 (GR). The short motif at 349–351 (SRL) is the Microbody targeting signal element.

Belongs to the FMN-dependent alpha-hydroxy acid dehydrogenase family. As to quaternary structure, homotetramer. FMN is required as a cofactor. As to expression, expressed in the liver and kidney.

The protein localises to the peroxisome. It catalyses the reaction a (2S)-2-hydroxycarboxylate + O2 = a 2-oxocarboxylate + H2O2. The enzyme catalyses 2-hydroxyhexadecanoate + O2 = 2-oxohexadecanoate + H2O2. The catalysed reaction is 2-hydroxyoctanoate + O2 = 2-oxooctanoate + H2O2. It participates in lipid metabolism; fatty acid metabolism. Oxidase that catalyzes the oxidation of medium and long chain hydroxyacids such as 2-hydroxyhexadecanoate and 2-hydroxyoctanoate, to the correspondong 2-oxoacids. Its role in the oxidation of 2-hydroxy fatty acids may contribute to the general pathway of fatty acid alpha-oxidation. Active in vitro with the artificial electron acceptor 2,6-dichlorophenolindophenol (DCIP), but O2 is believed to be the physiological electron acceptor, leading to the production of H2O2. Is not active on glycolate, glyoxylate, L-lactate and 2-hydroxybutanoate. This is 2-Hydroxyacid oxidase 2 (HAO2) from Homo sapiens (Human).